The sequence spans 283 residues: Phosphatidylglycerol--prolipoprotein diacylglyceryl transferase (283 aa).

The next 4 membrane-spanning stretches (helical) occupy residues 19–39, 59–79, 90–110, and 120–140; these read IGPI…LIGV, LSIW…VLFQ, IIAI…GTLA, and VPFW…QAIG. Position 141 (R141) interacts with a 1,2-diacyl-sn-glycero-3-phospho-(1'-sn-glycerol). The next 3 membrane-spanning stretches (helical) occupy residues 181-201, 212-232, and 245-265; these read TFLY…TLFF, VGTL…WIEG, and IAQV…AWLY.

It belongs to the Lgt family.

The protein resides in the cell inner membrane. It catalyses the reaction L-cysteinyl-[prolipoprotein] + a 1,2-diacyl-sn-glycero-3-phospho-(1'-sn-glycerol) = an S-1,2-diacyl-sn-glyceryl-L-cysteinyl-[prolipoprotein] + sn-glycerol 1-phosphate + H(+). The protein operates within protein modification; lipoprotein biosynthesis (diacylglyceryl transfer). In terms of biological role, catalyzes the transfer of the diacylglyceryl group from phosphatidylglycerol to the sulfhydryl group of the N-terminal cysteine of a prolipoprotein, the first step in the formation of mature lipoproteins. This chain is Phosphatidylglycerol--prolipoprotein diacylglyceryl transferase, found in Nostoc sp. (strain PCC 7120 / SAG 25.82 / UTEX 2576).